The primary structure comprises 419 residues: MDKKPLDVLISATGLWMSRTGTLHKIKHHEVSRSKIYIEMACGDHLVVNNSRSCRTARAFRHHKYRKTCKRCRVSDEDINNFLTRSTESKNSVKVRVVSAPKVKKAMPKSVSRAPKPLENSVSAKASTNTSRSVPSPAKSTPNSSVPASAPAPSLTRSQLDRVEALLSPEDKISLNMAKPFRELEPELVTRRKNDFQRLYTNDREDYLGKLERDITKFFVDRGFLEIKSPILIPAEYVERMGINNDTELSKQIFRVDKNLCLRPMLAPTLYNYLRKLDRILPGPIKIFEVGPCYRKESDGKEHLEEFTMVNFCQMGSGCTRENLEALIKEFLDYLEIDFEIVGDSCMVYGDTLDIMHGDLELSSAVVGPVSLDREWGIDKPWIGAGFGLERLLKVMHGFKNIKRASRSESYYNGISTNL.

The disordered stretch occupies residues 100-157 (APKVKKAMPKSVSRAPKPLENSVSAKASTNTSRSVPSPAKSTPNSSVPASAPAPSLTR). Positions 120-141 (NSVSAKASTNTSRSVPSPAKST) are enriched in polar residues. Positions 142–154 (PNSSVPASAPAPS) are enriched in low complexity.

It belongs to the class-II aminoacyl-tRNA synthetase family.

The protein resides in the cytoplasm. The enzyme catalyses tRNA(Pyl) + L-pyrrolysine + ATP = L-pyrrolysyl-tRNA(Pyl) + AMP + diphosphate. Its function is as follows. Catalyzes the attachment of pyrrolysine to tRNA(Pyl). Pyrrolysine is a lysine derivative encoded by the termination codon UAG. The sequence is that of Pyrrolysine--tRNA ligase (pylS) from Methanosarcina barkeri.